The following is a 379-amino-acid chain: Homoserine O-succinyltransferase (379 aa).

Positions 51 to 360 (NAVLICHALS…DSPYGHDAFL (310 aa)) constitute an AB hydrolase-1 domain. The active-site Nucleophile is the serine 157. Arginine 227 provides a ligand contact to substrate. Catalysis depends on residues aspartate 323 and histidine 356. Aspartate 357 is a substrate binding site.

It belongs to the AB hydrolase superfamily. MetX family. As to quaternary structure, homodimer.

The protein resides in the cytoplasm. The catalysed reaction is L-homoserine + succinyl-CoA = O-succinyl-L-homoserine + CoA. It functions in the pathway amino-acid biosynthesis; L-methionine biosynthesis via de novo pathway; O-succinyl-L-homoserine from L-homoserine: step 1/1. In terms of biological role, transfers a succinyl group from succinyl-CoA to L-homoserine, forming succinyl-L-homoserine. In Pseudomonas entomophila (strain L48), this protein is Homoserine O-succinyltransferase.